The chain runs to 471 residues: Trigger factor (471 aa).

Residues 174-261 (GDVAVVSFEG…VKDLKTRELP (88 aa)) form the PPIase FKBP-type domain. Polar residues predominate over residues 436–446 (ETLPKTKSLNG). A disordered region spans residues 436–471 (ETLPKTKSLNGKPSTQGKTSQSKSKKTKTKVEKTTK). Residues 447 to 457 (KPSTQGKTSQS) are compositionally biased toward low complexity.

The protein belongs to the FKBP-type PPIase family. Tig subfamily.

The protein resides in the cytoplasm. The enzyme catalyses [protein]-peptidylproline (omega=180) = [protein]-peptidylproline (omega=0). Functionally, involved in protein export. Acts as a chaperone by maintaining the newly synthesized protein in an open conformation. Functions as a peptidyl-prolyl cis-trans isomerase. This chain is Trigger factor, found in Prochlorococcus marinus (strain MIT 9211).